The following is a 272-amino-acid chain: Tryptophan synthase alpha chain (272 aa).

Active-site proton acceptor residues include E49 and D60.

It belongs to the TrpA family. In terms of assembly, tetramer of two alpha and two beta chains.

It carries out the reaction (1S,2R)-1-C-(indol-3-yl)glycerol 3-phosphate + L-serine = D-glyceraldehyde 3-phosphate + L-tryptophan + H2O. Its pathway is amino-acid biosynthesis; L-tryptophan biosynthesis; L-tryptophan from chorismate: step 5/5. Functionally, the alpha subunit is responsible for the aldol cleavage of indoleglycerol phosphate to indole and glyceraldehyde 3-phosphate. This chain is Tryptophan synthase alpha chain, found in Acidithiobacillus ferrooxidans (strain ATCC 23270 / DSM 14882 / CIP 104768 / NCIMB 8455) (Ferrobacillus ferrooxidans (strain ATCC 23270)).